Here is a 560-residue protein sequence, read N- to C-terminus: 2-succinyl-5-enolpyruvyl-6-hydroxy-3-cyclohexene-1-carboxylate synthase (560 aa).

It belongs to the TPP enzyme family. MenD subfamily. In terms of assembly, homodimer. Requires Mg(2+) as cofactor. The cofactor is Mn(2+). It depends on thiamine diphosphate as a cofactor.

It catalyses the reaction isochorismate + 2-oxoglutarate + H(+) = 5-enolpyruvoyl-6-hydroxy-2-succinyl-cyclohex-3-ene-1-carboxylate + CO2. It functions in the pathway quinol/quinone metabolism; 1,4-dihydroxy-2-naphthoate biosynthesis; 1,4-dihydroxy-2-naphthoate from chorismate: step 2/7. Its pathway is quinol/quinone metabolism; menaquinone biosynthesis. Its function is as follows. Catalyzes the thiamine diphosphate-dependent decarboxylation of 2-oxoglutarate and the subsequent addition of the resulting succinic semialdehyde-thiamine pyrophosphate anion to isochorismate to yield 2-succinyl-5-enolpyruvyl-6-hydroxy-3-cyclohexene-1-carboxylate (SEPHCHC). In Staphylococcus saprophyticus subsp. saprophyticus (strain ATCC 15305 / DSM 20229 / NCIMB 8711 / NCTC 7292 / S-41), this protein is 2-succinyl-5-enolpyruvyl-6-hydroxy-3-cyclohexene-1-carboxylate synthase.